The sequence spans 290 residues: PIH1 domain-containing protein 1 (290 aa).

3 positions are modified to phosphoserine: serine 12, serine 16, and serine 173.

It belongs to the PIH1 family. Component of the R2TP complex composed at least of RUVBL1, RUVBL2, RPAP3 and PIHD1. Component of the PAQosome complex which is responsible for the biogenesis of several protein complexes and which consists of R2TP complex members RUVBL1, RUVBL2, RPAP3 and PIH1D1, URI complex members PFDN2, PFDN6, PDRG1, UXT and URI1 as well as ASDURF, POLR2E and DNAAF10/WDR92. Interacts with phosphorylated TELO2. Mediates interaction of TELO2 with the R2TP complex. Interacts with phosphorylated ECD, EFTUD2/SNRP116, RPB1 and UBR5 and with RPB1 in a phosphorylation-independent manner. Interacts with the core C/D box snoRNP particle components NOP58 and FBL and with RUVBL1/TIP49. Interacts with RPAP3 and DNAAF10. Interacts with histone H4 and with SWI/SNF complex member SMARCB1/SNF5. Interacts with the mTORC1 complex member RPTOR. Interacts with isoform 1 of MSL1.

It is found in the nucleus. Functionally, involved in the assembly of C/D box small nucleolar ribonucleoprotein (snoRNP) particles. Recruits the SWI/SNF complex to the core promoter of rRNA genes and enhances pre-rRNA transcription. Mediates interaction of TELO2 with the R2TP complex which is necessary for the stability of MTOR and SMG1. Positively regulates the assembly and activity of the mTORC1 complex. The polypeptide is PIH1 domain-containing protein 1 (Pih1d1) (Mus musculus (Mouse)).